Reading from the N-terminus, the 571-residue chain is Urease subunit alpha (571 aa).

The region spanning 134–571 is the Urease domain; it reads GAIDTHIHFI…LPMAQRYFLF (438 aa). Residues His139, His141, and Lys222 each contribute to the Ni(2+) site. Lys222 is modified (N6-carboxylysine). Residue His224 coordinates substrate. Ni(2+) contacts are provided by His251 and His277. The active-site Proton donor is His325. Asp365 contributes to the Ni(2+) binding site.

Belongs to the metallo-dependent hydrolases superfamily. Urease alpha subunit family. Heterotrimer of UreA (gamma), UreB (beta) and UreC (alpha) subunits. Three heterotrimers associate to form the active enzyme. Requires Ni cation as cofactor. In terms of processing, carboxylation allows a single lysine to coordinate two nickel ions.

It localises to the cytoplasm. The catalysed reaction is urea + 2 H2O + H(+) = hydrogencarbonate + 2 NH4(+). It functions in the pathway nitrogen metabolism; urea degradation; CO(2) and NH(3) from urea (urease route): step 1/1. This Bordetella parapertussis (strain 12822 / ATCC BAA-587 / NCTC 13253) protein is Urease subunit alpha.